Reading from the N-terminus, the 376-residue chain is Flagellar P-ring protein 2 (376 aa).

The signal sequence occupies residues 1 to 19 (MTRLLLALILVVSAASAQA).

It belongs to the FlgI family. In terms of assembly, the basal body constitutes a major portion of the flagellar organelle and consists of four rings (L,P,S, and M) mounted on a central rod.

Its subcellular location is the periplasm. The protein resides in the bacterial flagellum basal body. Assembles around the rod to form the L-ring and probably protects the motor/basal body from shearing forces during rotation. This chain is Flagellar P-ring protein 2, found in Bradyrhizobium diazoefficiens (strain JCM 10833 / BCRC 13528 / IAM 13628 / NBRC 14792 / USDA 110).